Reading from the N-terminus, the 152-residue chain is Natriuretic peptides A (152 aa).

Residues M1–A24 form the signal peptide. 2 propeptides span residues N25–R122 and E92–E102. The tract at residues P58–W101 is disordered. S128 is subject to Phosphoserine. A disulfide bridge connects residues C129 and C145. Positions N146–Y150 are important for degradation of atrial natriuretic peptide by IDE.

It belongs to the natriuretic peptide family. Homodimer; disulfide-linked antiparallel dimer. In terms of processing, the precursor molecule is proteolytically cleaved by CORIN at Arg-122 to produce the atrial natriuretic peptide. Undergoes further proteolytic cleavage by unknown proteases to give rise to long-acting natriuretic peptide, vessel dilator and kaliuretic peptide. Additional processing gives rise to the auriculin and atriopeptin peptides. In the kidneys, alternative processing by an unknown protease results in the peptide urodilatin. Cleavage by MME initiates degradation of the factor and thereby regulates its activity. Degradation by IDE results in reduced activation of NPR1 (in vitro). During IDE degradation, the resulting products can temporarily stimulate NPR2 to produce cGMP, before the fragments are completely degraded and inactivated by IDE (in vitro). Post-translationally, degraded by IDE. In terms of processing, phosphorylation on Ser-128 decreases vasorelaxant activity.

Its subcellular location is the secreted. The protein resides in the perikaryon. The protein localises to the cell projection. Functionally, hormone that plays a key role in mediating cardio-renal homeostasis, and is involved in vascular remodeling and regulating energy metabolism. Acts by specifically binding and stimulating NPR1 to produce cGMP, which in turn activates effector proteins, such as PRKG1, that drive various biological responses. Regulates vasodilation, natriuresis, diuresis and aldosterone synthesis and is therefore essential for regulating blood pressure, controlling the extracellular fluid volume and maintaining the fluid-electrolyte balance. Also involved in inhibiting cardiac remodeling and cardiac hypertrophy by inducing cardiomyocyte apoptosis and attenuating the growth of cardiomyocytes and fibroblasts. Plays a role in female pregnancy by promoting trophoblast invasion and spiral artery remodeling in uterus, and thus prevents pregnancy-induced hypertension. In adipose tissue, acts in various cGMP- and PKG-dependent pathways to regulate lipid metabolism and energy homeostasis. This includes up-regulating lipid metabolism and mitochondrial oxygen utilization by activating the AMP-activated protein kinase (AMPK), and increasing energy expenditure by acting via MAPK11 to promote the UCP1-dependent thermogenesis of brown adipose tissue. Binds the clearance receptor NPR3 which removes the hormone from circulation. May have a role in cardio-renal homeostasis through regulation of natriuresis, diuresis, vasodilation, and inhibiting aldosterone synthesis. In vitro, promotes the production of cGMP and induces vasodilation. May promote natriuresis, at least in part, by enhancing prostaglandin E2 synthesis resulting in the inhibition of renal Na+-K+-ATPase. However reports on the involvement of this peptide in mammal blood volume and blood pressure homeostasis are conflicting; according to a report, in vivo it is not sufficient to activate cGMP and does not inhibit collecting duct transport nor effect diuresis and natriuresis. Appears to bind to specific receptors that are distinct from the receptors bound by atrial natriuretic peptide and vessel dilator. Possibly enhances protein excretion in urine by decreasing proximal tubular protein reabsorption. In terms of biological role, may have a role in cardio-renal homeostasis through regulation of natriuresis, diuresis, and vasodilation. In vitro, promotes the production of cGMP and induces vasodilation. May promote natriuresis, at least in part, by enhancing prostaglandin E2 synthesis resulting in the inhibition of renal Na+-K+-ATPase. However reports on the involvement of this peptide in mammal blood volume and blood pressure homeostasis are conflicting; according to a report it is not sufficient to activate cGMP and does not inhibit collecting duct transport nor effect diuresis and natriuresis. Appears to bind to specific receptors that are distinct from the receptors bound by the atrial natriuretic and long-acting natriuretic peptides. Possibly functions in protein excretion in urine by maintaining the integrity of the proximal tubules and enhancing protein excretion by decreasing proximal tubular protein reabsorption. Its function is as follows. May have a role in cardio-renal homeostasis through regulation of diuresis and inhibiting aldosterone synthesis. In vitro, promotes the production of cGMP and induces vasodilation. May promote natriuresis, at least in part, by enhancing prostaglandin E2 synthesis resulting in the inhibition of renal Na+-K+-ATPase. May have a role in potassium excretion but not sodium excretion (natriuresis). Possibly enhances protein excretion in urine by decreasing proximal tubular protein reabsorption. Functionally, hormone produced in the kidneys that appears to be important for maintaining cardio-renal homeostasis. Mediates vasodilation, natriuresis and diuresis primarily in the renal system, in order to maintain the extracellular fluid volume and control the fluid-electrolyte balance. Specifically binds and stimulates cGMP production by renal transmembrane receptors, likely NPR1. Urodilatin not ANP, may be the natriuretic peptide responsible for the regulation of sodium and water homeostasis in the kidney. May have a role in cardio-renal homeostasis through regulation of natriuresis and vasodilation. In vivo promotes natriuresis and in vitro, vasodilates renal artery strips. In terms of biological role, may have a role in cardio-renal homeostasis through regulation of regulation of natriuresis and vasodilation. In vivo promotes natriuresis. In vitro, vasodilates intestinal smooth muscle but not smooth muscle strips. Its function is as follows. May have a role in cardio-renal homeostasis through regulation of natriuresis and vasodilation. In vivo promotes natriuresis. In vitro, selectively vasodilates intestinal and vascular smooth muscle strips. Functionally, may have a role in cardio-renal homeostasis through regulation of natriuresis and vasodilation. In vivo promotes natriuresis. In vitro, selectively vasodilates intestinal smooth muscle but not vascular smooth muscle strips. This chain is Natriuretic peptides A (NPPA), found in Bos taurus (Bovine).